The sequence spans 163 residues: Beta-carbonic anhydrase 1 (163 aa).

Residues C35, D37, H88, and C91 each coordinate Zn(2+).

It belongs to the beta-class carbonic anhydrase family. As to quaternary structure, homotetramer. It depends on Zn(2+) as a cofactor.

It carries out the reaction hydrogencarbonate + H(+) = CO2 + H2O. Functionally, catalyzes the reversible hydration of carbon dioxide to form bicarbonate. This is Beta-carbonic anhydrase 1 from Mycobacterium bovis (strain ATCC BAA-935 / AF2122/97).